Here is a 352-residue protein sequence, read N- to C-terminus: MDVAHPEEVTRFSPDILMEKFNVSEACFLPPPISIQLILQLTWLDIGVFAALTAMTVLTIAIYLEIVCYLMDKVKCPIKRKTLMWNSAAPTVIAITSCLGLWVPRAIMFVDMAAAMYFGVGFYLMLLIIVQGYGGEEAMLQHLATHTIRISTGPCCCCCPCLPHIHLTRQKYKIFVLGAFQVAFLRPALFLLGVVLWTNGLYDPDDWSSTSIFLWLNLFLGVSTILGLWPVNVLFRHSKVLMADQKLTCKFALFQAILILSSLQNSIIGTLAGAGHIGCAPPYSARTRGQQMNNQLLIIEMFFVGILTRISYRKRDDRPGHRHVGEVQQIVRECDQPAIADQQADHSSISHI.

The Extracellular segment spans residues 1–45 (MDVAHPEEVTRFSPDILMEKFNVSEACFLPPPISIQLILQLTWLD). Asparagine 22 carries N-linked (GlcNAc...) asparagine glycosylation. The helical transmembrane segment at 46–66 (IGVFAALTAMTVLTIAIYLEI) threads the bilayer. Topologically, residues 67–82 (VCYLMDKVKCPIKRKT) are cytoplasmic. The chain crosses the membrane as a helical span at residues 83–103 (LMWNSAAPTVIAITSCLGLWV). Topologically, residues 104 to 108 (PRAIM) are extracellular. Residues 109-129 (FVDMAAAMYFGVGFYLMLLII) traverse the membrane as a helical segment. The Cytoplasmic portion of the chain corresponds to 130–173 (VQGYGGEEAMLQHLATHTIRISTGPCCCCCPCLPHIHLTRQKYK). A helical membrane pass occupies residues 174 to 194 (IFVLGAFQVAFLRPALFLLGV). The Extracellular portion of the chain corresponds to 195 to 210 (VLWTNGLYDPDDWSST). The chain crosses the membrane as a helical span at residues 211-231 (SIFLWLNLFLGVSTILGLWPV). The Cytoplasmic segment spans residues 232 to 250 (NVLFRHSKVLMADQKLTCK). The helical transmembrane segment at 251–271 (FALFQAILILSSLQNSIIGTL) threads the bilayer. Topologically, residues 272–294 (AGAGHIGCAPPYSARTRGQQMNN) are extracellular. A helical transmembrane segment spans residues 295-312 (QLLIIEMFFVGILTRISY). The Cytoplasmic portion of the chain corresponds to 313–352 (RKRDDRPGHRHVGEVQQIVRECDQPAIADQQADHSSISHI).

This sequence belongs to the OST-alpha family. Interacts with slc51b. The Ost-alpha/Ost-beta complex is a heterodimer composed of alpha (slc51a) and beta (slc51b) subunit. In terms of tissue distribution, expressed in liver.

It localises to the cell membrane. It is found in the endoplasmic reticulum membrane. The enzyme catalyses taurocholate(out) = taurocholate(in). The catalysed reaction is prostaglandin E2(out) = prostaglandin E2(in). It carries out the reaction estrone 3-sulfate(out) = estrone 3-sulfate(in). It catalyses the reaction dehydroepiandrosterone 3-sulfate(out) = dehydroepiandrosterone 3-sulfate(in). The enzyme catalyses tauroursodeoxycholate(out) = tauroursodeoxycholate(in). The catalysed reaction is glycoursodeoxycholate(out) = glycoursodeoxycholate(in). It carries out the reaction glycocholate(out) = glycocholate(in). It catalyses the reaction taurochenodeoxycholate(out) = taurochenodeoxycholate(in). The enzyme catalyses glycochenodeoxycholate(out) = glycochenodeoxycholate(in). The catalysed reaction is taurodeoxycholate(out) = taurodeoxycholate(in). It carries out the reaction glycodeoxycholate(out) = glycodeoxycholate(in). Essential component of the Ost-alpha/Ost-beta complex, a heterodimer that acts as the intestinal basolateral transporter responsible for the translocation of bile acids (such as taurocholate), steroids (such as estrone sulfate), and eicosanoids (such as prostaglandin E2). The sequence is that of Organic solute transporter subunit alpha (slc51a) from Leucoraja erinaceus (Little skate).